The sequence spans 288 residues: Quinate/shikimate dehydrogenase (288 aa).

Positions 71 and 107 each coordinate substrate. NAD(+)-binding positions include 132–135 (AGGA), 155–158 (NRRD), Lys205, 232–235 (CVYN), and Gly255.

It belongs to the shikimate dehydrogenase family. In terms of assembly, homodimer.

The enzyme catalyses L-quinate + NAD(+) = 3-dehydroquinate + NADH + H(+). It catalyses the reaction L-quinate + NADP(+) = 3-dehydroquinate + NADPH + H(+). The catalysed reaction is shikimate + NADP(+) = 3-dehydroshikimate + NADPH + H(+). It carries out the reaction shikimate + NAD(+) = 3-dehydroshikimate + NADH + H(+). The protein operates within metabolic intermediate biosynthesis; chorismate biosynthesis; chorismate from D-erythrose 4-phosphate and phosphoenolpyruvate: step 4/7. In terms of biological role, the actual biological function of YdiB remains unclear, nor is it known whether 3-dehydroshikimate or quinate represents the natural substrate. Catalyzes the reversible NAD-dependent reduction of both 3-dehydroshikimate (DHSA) and 3-dehydroquinate to yield shikimate (SA) and quinate, respectively. It can use both NAD or NADP for catalysis, however it has higher catalytic efficiency with NAD. This is Quinate/shikimate dehydrogenase from Shigella flexneri.